A 427-amino-acid polypeptide reads, in one-letter code: C4-dicarboxylate TRAP transporter large permease protein DctM (427 aa).

Helical transmembrane passes span 2 to 22 (TILF…PIAV), 55 to 75 (TLLA…GGVA), 91 to 111 (GGLA…SGSS), 115 to 135 (VAAV…PQAF), 138 to 158 (GIVC…VMVV), 171 to 191 (FIAG…VIYI), 216 to 236 (ALWG…GAFT), 237 to 257 (PTEA…FVYR), 274 to 294 (LTIM…VLTT), 310 to 330 (LSPW…GNFM), 335 to 355 (IILI…IDPI), 359 to 379 (IIMV…LNLF), and 396 to 416 (ALPW…IPAV).

The protein belongs to the TRAP transporter large permease family. The complex comprises the extracytoplasmic solute receptor protein DctP, and the two transmembrane proteins DctQ and DctM.

The protein resides in the cell inner membrane. Its function is as follows. Part of the tripartite ATP-independent periplasmic (TRAP) transport system DctPQM involved in C4-dicarboxylates uptake. This chain is C4-dicarboxylate TRAP transporter large permease protein DctM, found in Pseudomonas aeruginosa (strain ATCC 15692 / DSM 22644 / CIP 104116 / JCM 14847 / LMG 12228 / 1C / PRS 101 / PAO1).